Here is a 153-residue protein sequence, read N- to C-terminus: D-aminoacyl-tRNA deacylase (153 aa).

A Gly-cisPro motif, important for rejection of L-amino acids motif is present at residues 142–143 (GP).

This sequence belongs to the DTD family. In terms of assembly, homodimer.

The protein localises to the cytoplasm. The enzyme catalyses glycyl-tRNA(Ala) + H2O = tRNA(Ala) + glycine + H(+). The catalysed reaction is a D-aminoacyl-tRNA + H2O = a tRNA + a D-alpha-amino acid + H(+). In terms of biological role, an aminoacyl-tRNA editing enzyme that deacylates mischarged D-aminoacyl-tRNAs. Also deacylates mischarged glycyl-tRNA(Ala), protecting cells against glycine mischarging by AlaRS. Acts via tRNA-based rather than protein-based catalysis; rejects L-amino acids rather than detecting D-amino acids in the active site. By recycling D-aminoacyl-tRNA to D-amino acids and free tRNA molecules, this enzyme counteracts the toxicity associated with the formation of D-aminoacyl-tRNA entities in vivo and helps enforce protein L-homochirality. This chain is D-aminoacyl-tRNA deacylase, found in Cupriavidus taiwanensis (strain DSM 17343 / BCRC 17206 / CCUG 44338 / CIP 107171 / LMG 19424 / R1) (Ralstonia taiwanensis (strain LMG 19424)).